The chain runs to 105 residues: ATP synthase subunit c (105 aa).

3 consecutive transmembrane segments (helical) span residues 3-23 (FLAL…GGMG), 32-52 (SILG…IGMG), and 78-98 (VAMA…IIAI).

Belongs to the ATPase C chain family. In terms of assembly, F-type ATPases have 2 components, F(1) - the catalytic core - and F(0) - the membrane proton channel. F(1) has five subunits: alpha(3), beta(3), gamma(1), delta(1), epsilon(1). F(0) has three main subunits: a(1), b(2) and c(10-14). The alpha and beta chains form an alternating ring which encloses part of the gamma chain. F(1) is attached to F(0) by a central stalk formed by the gamma and epsilon chains, while a peripheral stalk is formed by the delta and b chains.

It is found in the cell inner membrane. Functionally, f(1)F(0) ATP synthase produces ATP from ADP in the presence of a proton or sodium gradient. F-type ATPases consist of two structural domains, F(1) containing the extramembraneous catalytic core and F(0) containing the membrane proton channel, linked together by a central stalk and a peripheral stalk. During catalysis, ATP synthesis in the catalytic domain of F(1) is coupled via a rotary mechanism of the central stalk subunits to proton translocation. In terms of biological role, key component of the F(0) channel; it plays a direct role in translocation across the membrane. A homomeric c-ring of between 10-14 subunits forms the central stalk rotor element with the F(1) delta and epsilon subunits. This chain is ATP synthase subunit c, found in Helicobacter pylori (strain P12).